Here is a 520-residue protein sequence, read N- to C-terminus: Keratin, type II cytoskeletal 4 (520 aa).

Residues 1–136 (MIARQQCVRG…DPEIQKVRTE (136 aa)) form a head region. R13 is subject to Omega-N-methylarginine. Residues 137 to 172 (EREQIKLLNNKFASFIDKVQFLEQQNKVLETKWNLL) are coil 1A. An IF rod domain is found at 137-450 (EREQIKLLNN…KLLEGEEYRM (314 aa)). A linker 1 region spans residues 173–191 (QQQTTTTSSKNLEPLFETY). Residues 192–284 (LSVLRKQLDT…LYDAELSQMQ (93 aa)) are coil 1B. A linker 12 region spans residues 285–307 (THVSDTSVVLSMDNNRNLDLDSI). Residues 308–447 (IAEVRAQYEE…TYRKLLEGEE (140 aa)) form a coil 2 region. The tail stretch occupies residues 448–520 (YRMSGECQSA…ISTTTLNKRR (73 aa)). The tract at residues 500 to 520 (GSVSGSSSSKIISTTTLNKRR) is disordered. A compositionally biased stretch (low complexity) spans 503–514 (SGSSSSKIISTT).

The protein belongs to the intermediate filament family. Heterotetramer of two type I and two type II keratins. Keratin-4 is generally associated with keratin-13. In terms of tissue distribution, detected in the suprabasal layer of the stratified epithelium of the esophagus, exocervix, vagina, mouth and lingual mucosa, and in cells and cell clusters in the mucosa and serous gland ducts of the esophageal submucosa (at protein level). Expressed widely in the exocervix and esophageal epithelium, with lowest levels detected in the basal cell layer.

The polypeptide is Keratin, type II cytoskeletal 4 (KRT4) (Homo sapiens (Human)).